Consider the following 251-residue polypeptide: Flap endonuclease Xni (251 aa).

Asp-104 serves as a coordination point for Mg(2+). Residues 160 to 250 form the 5'-3' exonuclease domain; the sequence is VLPRQLPDYW…SGNLQQLRLK (91 aa). Leu-171, Ala-172, Pro-180, Val-182, and Val-185 together coordinate K(+). The interval 184-189 is interaction with DNA; it reads GVGAKT.

Belongs to the Xni family. Mg(2+) is required as a cofactor. The cofactor is K(+).

Functionally, has flap endonuclease activity. During DNA replication, flap endonucleases cleave the 5'-overhanging flap structure that is generated by displacement synthesis when DNA polymerase encounters the 5'-end of a downstream Okazaki fragment. In Yersinia pestis bv. Antiqua (strain Nepal516), this protein is Flap endonuclease Xni.